Reading from the N-terminus, the 154-residue chain is Probable cyclic pyranopterin monophosphate synthase (154 aa).

Residues 74 to 76 (LCH) and 110 to 111 (ME) contribute to the substrate site. Aspartate 125 is a catalytic residue.

It belongs to the MoaC family. As to quaternary structure, homohexamer; trimer of dimers.

The catalysed reaction is (8S)-3',8-cyclo-7,8-dihydroguanosine 5'-triphosphate = cyclic pyranopterin phosphate + diphosphate. The protein operates within cofactor biosynthesis; molybdopterin biosynthesis. Functionally, catalyzes the conversion of (8S)-3',8-cyclo-7,8-dihydroguanosine 5'-triphosphate to cyclic pyranopterin monophosphate (cPMP). The protein is Probable cyclic pyranopterin monophosphate synthase of Methanosphaerula palustris (strain ATCC BAA-1556 / DSM 19958 / E1-9c).